An 884-amino-acid chain; its full sequence is E3 ubiquitin-protein ligase BRE1-like 1 (884 aa).

A disordered region spans residues 1–37; it reads MGSTGEPDRKRRLSSSVAPGGGAPVSPAKRLAVAPTS. A coiled-coil region spans residues 49 to 86; the sequence is YKNQKLSEQLEAHKFEYRALENKFAGLKEKQRTHNETL. A disordered region spans residues 107–127; the sequence is KSGSPNSSPGSGHNNVQKDGT. Residues 108 to 121 are compositionally biased toward low complexity; it reads SGSPNSSPGSGHNN. 4 coiled-coil regions span residues 216-541, 580-663, 696-762, and 789-827; these read LNNV…ELKL, SKLE…LQQI, RNLQ…QSLD, and KKRI…KEYR. Residues 832–871 form an RING-type zinc finger; sequence CGICHDRQKEVVITKCYHLFCNQCIQKSLGNRQRRCPSCS.

Belongs to the BRE1 family.

The protein resides in the nucleus. It catalyses the reaction S-ubiquitinyl-[E2 ubiquitin-conjugating enzyme]-L-cysteine + [acceptor protein]-L-lysine = [E2 ubiquitin-conjugating enzyme]-L-cysteine + N(6)-ubiquitinyl-[acceptor protein]-L-lysine.. The protein operates within protein modification; protein ubiquitination. Its function is as follows. E3 ubiquitin-protein ligase that monoubiquitinates H2B to form H2BK143ub1. H2BK143ub1 gives a specific tag for epigenetic transcriptional activation and is also prerequisite for H3K4me and maybe H3K79me. It thereby plays a central role in histone code and gene regulation. Forms a ubiquitin ligase complex in cooperation with the E2 enzyme UBC2/RAD6. This is E3 ubiquitin-protein ligase BRE1-like 1 (BRE1A) from Oryza sativa subsp. indica (Rice).